Here is a 55-residue protein sequence, read N- to C-terminus: Photosystem I reaction center subunit IX (55 aa).

The helical transmembrane segment at 7–27 (YLSVAPVLSTLWFGSLAGLLI) threads the bilayer.

This sequence belongs to the PsaJ family.

The protein resides in the plastid. The protein localises to the chloroplast thylakoid membrane. Its function is as follows. May help in the organization of the PsaE and PsaF subunits. The chain is Photosystem I reaction center subunit IX from Gossypium barbadense (Sea Island cotton).